The primary structure comprises 335 residues: uncharacterized protein (335 aa).

This is an uncharacterized protein from Schizosaccharomyces pombe (strain 972 / ATCC 24843) (Fission yeast).